The following is a 754-amino-acid chain: Glutathione biosynthesis bifunctional protein GshAB (754 aa).

The interval 1–332 (MTLNQLLQKL…QGHALNEKIA (332 aa)) is glutamate--cysteine ligase. The 259-residue stretch at 488 to 746 (KKILADASFP…ITTKILDKLF (259 aa)) folds into the ATP-grasp domain. Residue 515–573 (PLIKDKQIVVKPKSTNFGLGISIFQEPASLDNYQKALEIAFAEDTSVLVEEFIPGTEYR) coordinates ATP. Mg(2+) is bound by residues Asp-695, Glu-716, and Asn-718. Mn(2+)-binding residues include Asp-695, Glu-716, and Asn-718.

In the N-terminal section; belongs to the glutamate--cysteine ligase type 1 family. Type 2 subfamily. In terms of assembly, monomer. Requires Mg(2+) as cofactor. It depends on Mn(2+) as a cofactor.

It carries out the reaction L-cysteine + L-glutamate + ATP = gamma-L-glutamyl-L-cysteine + ADP + phosphate + H(+). The catalysed reaction is gamma-L-glutamyl-L-cysteine + glycine + ATP = glutathione + ADP + phosphate + H(+). It participates in sulfur metabolism; glutathione biosynthesis; glutathione from L-cysteine and L-glutamate: step 1/2. Its pathway is sulfur metabolism; glutathione biosynthesis; glutathione from L-cysteine and L-glutamate: step 2/2. Its function is as follows. Synthesizes glutathione from L-glutamate and L-cysteine via gamma-L-glutamyl-L-cysteine. The polypeptide is Glutathione biosynthesis bifunctional protein GshAB (Streptococcus thermophilus (strain ATCC BAA-250 / LMG 18311)).